Reading from the N-terminus, the 1710-residue chain is Ankyrin repeat domain-containing protein 26 (1710 aa).

The interval 1–41 (MKKIFSKKGESPLGSFARRQRSSAGGGGEPGEGAYSQPGYH) is disordered. Phosphoserine is present on residues serine 11 and serine 15. ANK repeat units lie at residues 45 to 75 (RDLG…GLND), 79 to 108 (MNRT…QLNV), 112 to 141 (ENRT…DPNL), 145 to 174 (HGNT…NIEA), and 178 to 207 (DDLT…NVNA). The segment at 222-274 (KEERIPKHSSQNSNSVDESSEDSLSRLSGKPGVDDSWPTSDDEDLNFDTKNVP) is disordered. Residues serine 241, serine 261, serine 489, and serine 530 each carry the phosphoserine modification. The tract at residues 504–630 (DSVPNKAGGM…EKRTSKESVN (127 aa)) is disordered. Residues 529-566 (ASEEEQEREGSENNQPQVEEERKKHRNNEMEVSANIHD) are a coiled coil. The segment covering 569–580 (TDDAEDDDDDDG) has biased composition (acidic residues). 2 stretches are compositionally biased toward basic and acidic residues: residues 586–602 (KSGE…ENKE) and 613–626 (KEVK…RTSK). The residue at position 631 (serine 631) is a Phosphoserine. Positions 650 to 660 (DSSLSEIDEDE) are enriched in acidic residues. The interval 650-698 (DSSLSEIDEDEGRPTKKTSNEKNKVKNQIQSMDDVDDLTQSSETASEDC) is disordered. A compositionally biased stretch (basic and acidic residues) spans 661–673 (GRPTKKTSNEKNK). Coiled coils occupy residues 743–873 (KNHC…NARM), 905–1472 (EEEK…MVEL), 1517–1587 (NNFA…NTKL), and 1649–1674 (LSKM…LESG). The disordered stretch occupies residues 892 to 912 (AQKKMNSENSHSHEEEKDLSH).

In terms of assembly, interacts with TRIO. Interacts with GPS2. Interacts with CCDC85B. Interacts with HMMR.

Its function is as follows. Acts as a regulator of adipogenesis. Involved in the regulation of the feeding behavior. The protein is Ankyrin repeat domain-containing protein 26 of Homo sapiens (Human).